The sequence spans 298 residues: ATP phosphoribosyltransferase (298 aa).

Belongs to the ATP phosphoribosyltransferase family. Long subfamily. Mg(2+) serves as cofactor.

Its subcellular location is the cytoplasm. It catalyses the reaction 1-(5-phospho-beta-D-ribosyl)-ATP + diphosphate = 5-phospho-alpha-D-ribose 1-diphosphate + ATP. It participates in amino-acid biosynthesis; L-histidine biosynthesis; L-histidine from 5-phospho-alpha-D-ribose 1-diphosphate: step 1/9. With respect to regulation, feedback inhibited by histidine. Catalyzes the condensation of ATP and 5-phosphoribose 1-diphosphate to form N'-(5'-phosphoribosyl)-ATP (PR-ATP). Has a crucial role in the pathway because the rate of histidine biosynthesis seems to be controlled primarily by regulation of HisG enzymatic activity. This chain is ATP phosphoribosyltransferase, found in Aliivibrio fischeri (strain ATCC 700601 / ES114) (Vibrio fischeri).